We begin with the raw amino-acid sequence, 556 residues long: Dihydroxy-acid dehydratase (556 aa).

Cysteine 47 provides a ligand contact to [2Fe-2S] cluster. A Mg(2+)-binding site is contributed by aspartate 79. Cysteine 120 is a [2Fe-2S] cluster binding site. Mg(2+) is bound by residues aspartate 121 and lysine 122. Residue lysine 122 is modified to N6-carboxylysine. Cysteine 192 lines the [2Fe-2S] cluster pocket. Glutamate 444 lines the Mg(2+) pocket. The active-site Proton acceptor is serine 470.

It belongs to the IlvD/Edd family. Homodimer. [2Fe-2S] cluster serves as cofactor. Mg(2+) is required as a cofactor.

The catalysed reaction is (2R)-2,3-dihydroxy-3-methylbutanoate = 3-methyl-2-oxobutanoate + H2O. It catalyses the reaction (2R,3R)-2,3-dihydroxy-3-methylpentanoate = (S)-3-methyl-2-oxopentanoate + H2O. It functions in the pathway amino-acid biosynthesis; L-isoleucine biosynthesis; L-isoleucine from 2-oxobutanoate: step 3/4. It participates in amino-acid biosynthesis; L-valine biosynthesis; L-valine from pyruvate: step 3/4. Its function is as follows. Functions in the biosynthesis of branched-chain amino acids. Catalyzes the dehydration of (2R,3R)-2,3-dihydroxy-3-methylpentanoate (2,3-dihydroxy-3-methylvalerate) into 2-oxo-3-methylpentanoate (2-oxo-3-methylvalerate) and of (2R)-2,3-dihydroxy-3-methylbutanoate (2,3-dihydroxyisovalerate) into 2-oxo-3-methylbutanoate (2-oxoisovalerate), the penultimate precursor to L-isoleucine and L-valine, respectively. The sequence is that of Dihydroxy-acid dehydratase from Prochlorococcus marinus (strain MIT 9313).